The chain runs to 187 residues: Ribosome-recycling factor (187 aa).

It belongs to the RRF family.

It localises to the cytoplasm. Its function is as follows. Responsible for the release of ribosomes from messenger RNA at the termination of protein biosynthesis. May increase the efficiency of translation by recycling ribosomes from one round of translation to another. The sequence is that of Ribosome-recycling factor from Nitrosococcus oceani (strain ATCC 19707 / BCRC 17464 / JCM 30415 / NCIMB 11848 / C-107).